The chain runs to 143 residues: Large ribosomal subunit protein uL11 (143 aa).

Belongs to the universal ribosomal protein uL11 family. Part of the ribosomal stalk of the 50S ribosomal subunit. Interacts with L10 and the large rRNA to form the base of the stalk. L10 forms an elongated spine to which L12 dimers bind in a sequential fashion forming a multimeric L10(L12)X complex. One or more lysine residues are methylated.

Its function is as follows. Forms part of the ribosomal stalk which helps the ribosome interact with GTP-bound translation factors. The chain is Large ribosomal subunit protein uL11 from Rhizobium johnstonii (strain DSM 114642 / LMG 32736 / 3841) (Rhizobium leguminosarum bv. viciae).